The chain runs to 291 residues: Acetyl-coenzyme A carboxylase carboxyl transferase subunit beta (291 aa).

In terms of domain architecture, CoA carboxyltransferase N-terminal spans 36–291; sequence MWVKCDGCGK…KILVIHGRGN (256 aa). Residues Cys40, Cys43, Cys59, and Cys62 each contribute to the Zn(2+) site. The C4-type zinc-finger motif lies at 40–62; the sequence is CDGCGKVLYKNDMEKNNKVCYHC.

The protein belongs to the AccD/PCCB family. In terms of assembly, acetyl-CoA carboxylase is a heterohexamer composed of biotin carboxyl carrier protein (AccB), biotin carboxylase (AccC) and two subunits each of ACCase subunit alpha (AccA) and ACCase subunit beta (AccD). Zn(2+) serves as cofactor.

It is found in the cytoplasm. It carries out the reaction N(6)-carboxybiotinyl-L-lysyl-[protein] + acetyl-CoA = N(6)-biotinyl-L-lysyl-[protein] + malonyl-CoA. The protein operates within lipid metabolism; malonyl-CoA biosynthesis; malonyl-CoA from acetyl-CoA: step 1/1. Functionally, component of the acetyl coenzyme A carboxylase (ACC) complex. Biotin carboxylase (BC) catalyzes the carboxylation of biotin on its carrier protein (BCCP) and then the CO(2) group is transferred by the transcarboxylase to acetyl-CoA to form malonyl-CoA. The protein is Acetyl-coenzyme A carboxylase carboxyl transferase subunit beta of Clostridium kluyveri (strain NBRC 12016).